Consider the following 241-residue polypeptide: Octanoyltransferase (241 aa).

A BPL/LPL catalytic domain is found at 49–233 (GEASELVWLL…AFGEVFGPSE (185 aa)). Substrate is bound by residues 87 to 94 (RGGQVTYH), 162 to 164 (AIG), and 175 to 177 (GIS). Cys193 serves as the catalytic Acyl-thioester intermediate.

Belongs to the LipB family.

Its subcellular location is the cytoplasm. It catalyses the reaction octanoyl-[ACP] + L-lysyl-[protein] = N(6)-octanoyl-L-lysyl-[protein] + holo-[ACP] + H(+). Its pathway is protein modification; protein lipoylation via endogenous pathway; protein N(6)-(lipoyl)lysine from octanoyl-[acyl-carrier-protein]: step 1/2. In terms of biological role, catalyzes the transfer of endogenously produced octanoic acid from octanoyl-acyl-carrier-protein onto the lipoyl domains of lipoate-dependent enzymes. Lipoyl-ACP can also act as a substrate although octanoyl-ACP is likely to be the physiological substrate. This chain is Octanoyltransferase, found in Nitrobacter hamburgensis (strain DSM 10229 / NCIMB 13809 / X14).